A 368-amino-acid chain; its full sequence is Phosphate acyltransferase (368 aa).

The interval Glu334–Ala368 is disordered.

This sequence belongs to the PlsX family. As to quaternary structure, homodimer. Probably interacts with PlsY.

The protein resides in the cytoplasm. The enzyme catalyses a fatty acyl-[ACP] + phosphate = an acyl phosphate + holo-[ACP]. The protein operates within lipid metabolism; phospholipid metabolism. Functionally, catalyzes the reversible formation of acyl-phosphate (acyl-PO(4)) from acyl-[acyl-carrier-protein] (acyl-ACP). This enzyme utilizes acyl-ACP as fatty acyl donor, but not acyl-CoA. The chain is Phosphate acyltransferase from Paraburkholderia xenovorans (strain LB400).